The primary structure comprises 296 residues: Formamidopyrimidine-DNA glycosylase (296 aa).

Catalysis depends on Pro-2, which acts as the Schiff-base intermediate with DNA. Glu-3 (proton donor) is an active-site residue. The Proton donor; for beta-elimination activity role is filled by Lys-58. His-104, Arg-126, and Lys-169 together coordinate DNA. The FPG-type zinc finger occupies 260–296 (SVYDRESQACRTPGCGGTVARIVQAGRSTFYCATCQK). Arg-286 functions as the Proton donor; for delta-elimination activity in the catalytic mechanism.

The protein belongs to the FPG family. As to quaternary structure, monomer. Requires Zn(2+) as cofactor.

The catalysed reaction is Hydrolysis of DNA containing ring-opened 7-methylguanine residues, releasing 2,6-diamino-4-hydroxy-5-(N-methyl)formamidopyrimidine.. It carries out the reaction 2'-deoxyribonucleotide-(2'-deoxyribose 5'-phosphate)-2'-deoxyribonucleotide-DNA = a 3'-end 2'-deoxyribonucleotide-(2,3-dehydro-2,3-deoxyribose 5'-phosphate)-DNA + a 5'-end 5'-phospho-2'-deoxyribonucleoside-DNA + H(+). Its function is as follows. Involved in base excision repair of DNA damaged by oxidation or by mutagenic agents. Acts as a DNA glycosylase that recognizes and removes damaged bases. Has a preference for oxidized purines, such as 7,8-dihydro-8-oxoguanine (8-oxoG). Has AP (apurinic/apyrimidinic) lyase activity and introduces nicks in the DNA strand. Cleaves the DNA backbone by beta-delta elimination to generate a single-strand break at the site of the removed base with both 3'- and 5'-phosphates. The chain is Formamidopyrimidine-DNA glycosylase from Rhizobium johnstonii (strain DSM 114642 / LMG 32736 / 3841) (Rhizobium leguminosarum bv. viciae).